Here is a 136-residue protein sequence, read N- to C-terminus: Plastocyanin (136 aa).

Positions 1–34 (MSLVFNLVKRLQLILLSLVVGGLAVAFLSNPAAA) are cleaved as a signal peptide. Positions 35 to 136 (ETYIVKMGSD…GMVGKIIVNG (102 aa)) constitute a Plastocyanin-like domain. Residues histidine 73, cysteine 120, histidine 123, and methionine 128 each contribute to the Cu cation site.

Belongs to the plastocyanin family. Cu(2+) serves as cofactor.

It is found in the cellular thylakoid membrane. Participates in electron transfer between P700 and the cytochrome b6-f complex in photosystem I. The sequence is that of Plastocyanin from Synechococcus sp. (strain JA-2-3B'a(2-13)) (Cyanobacteria bacterium Yellowstone B-Prime).